We begin with the raw amino-acid sequence, 334 residues long: Holliday junction branch migration complex subunit RuvB (334 aa).

The interval 1 to 182 (MDKRMVDQEF…FGVHLRLEYY (182 aa)) is large ATPase domain (RuvB-L). Residues Leu21, Arg22, Gly63, Lys66, Thr67, Thr68, 129–131 (EDF), Arg172, Tyr182, and Arg219 each bind ATP. Thr67 is a Mg(2+) binding site. A small ATPAse domain (RuvB-S) region spans residues 183 to 253 (NENDLKEIIT…TTKRALQLLQ (71 aa)). The head domain (RuvB-H) stretch occupies residues 256-334 (QHGLDYIDHK…HFNTTNEKRE (79 aa)). DNA is bound by residues Arg292, Arg311, and Arg316.

This sequence belongs to the RuvB family. In terms of assembly, homohexamer. Forms an RuvA(8)-RuvB(12)-Holliday junction (HJ) complex. HJ DNA is sandwiched between 2 RuvA tetramers; dsDNA enters through RuvA and exits via RuvB. An RuvB hexamer assembles on each DNA strand where it exits the tetramer. Each RuvB hexamer is contacted by two RuvA subunits (via domain III) on 2 adjacent RuvB subunits; this complex drives branch migration. In the full resolvosome a probable DNA-RuvA(4)-RuvB(12)-RuvC(2) complex forms which resolves the HJ.

Its subcellular location is the cytoplasm. It carries out the reaction ATP + H2O = ADP + phosphate + H(+). In terms of biological role, the RuvA-RuvB-RuvC complex processes Holliday junction (HJ) DNA during genetic recombination and DNA repair, while the RuvA-RuvB complex plays an important role in the rescue of blocked DNA replication forks via replication fork reversal (RFR). RuvA specifically binds to HJ cruciform DNA, conferring on it an open structure. The RuvB hexamer acts as an ATP-dependent pump, pulling dsDNA into and through the RuvAB complex. RuvB forms 2 homohexamers on either side of HJ DNA bound by 1 or 2 RuvA tetramers; 4 subunits per hexamer contact DNA at a time. Coordinated motions by a converter formed by DNA-disengaged RuvB subunits stimulates ATP hydrolysis and nucleotide exchange. Immobilization of the converter enables RuvB to convert the ATP-contained energy into a lever motion, pulling 2 nucleotides of DNA out of the RuvA tetramer per ATP hydrolyzed, thus driving DNA branch migration. The RuvB motors rotate together with the DNA substrate, which together with the progressing nucleotide cycle form the mechanistic basis for DNA recombination by continuous HJ branch migration. Branch migration allows RuvC to scan DNA until it finds its consensus sequence, where it cleaves and resolves cruciform DNA. In Staphylococcus epidermidis (strain ATCC 35984 / DSM 28319 / BCRC 17069 / CCUG 31568 / BM 3577 / RP62A), this protein is Holliday junction branch migration complex subunit RuvB.